Reading from the N-terminus, the 424-residue chain is Glutamate-1-semialdehyde 2,1-aminomutase (424 aa).

Position 263 is an N6-(pyridoxal phosphate)lysine (lysine 263).

The protein belongs to the class-III pyridoxal-phosphate-dependent aminotransferase family. HemL subfamily. As to quaternary structure, homodimer. It depends on pyridoxal 5'-phosphate as a cofactor.

The protein resides in the cytoplasm. It carries out the reaction (S)-4-amino-5-oxopentanoate = 5-aminolevulinate. It functions in the pathway porphyrin-containing compound metabolism; protoporphyrin-IX biosynthesis; 5-aminolevulinate from L-glutamyl-tRNA(Glu): step 2/2. In Campylobacter jejuni subsp. jejuni serotype O:6 (strain 81116 / NCTC 11828), this protein is Glutamate-1-semialdehyde 2,1-aminomutase.